A 287-amino-acid chain; its full sequence is Pyridoxal 5'-phosphate synthase subunit PdxS (287 aa).

Asp-21 serves as a coordination point for D-ribose 5-phosphate. Residue Lys-78 is the Schiff-base intermediate with D-ribose 5-phosphate of the active site. Gly-150 is a D-ribose 5-phosphate binding site. A D-glyceraldehyde 3-phosphate-binding site is contributed by Arg-162. D-ribose 5-phosphate-binding positions include Gly-211 and Gly-232 to Ser-233.

This sequence belongs to the PdxS/SNZ family. As to quaternary structure, in the presence of PdxT, forms a dodecamer of heterodimers.

It carries out the reaction aldehydo-D-ribose 5-phosphate + D-glyceraldehyde 3-phosphate + L-glutamine = pyridoxal 5'-phosphate + L-glutamate + phosphate + 3 H2O + H(+). The protein operates within cofactor biosynthesis; pyridoxal 5'-phosphate biosynthesis. In terms of biological role, catalyzes the formation of pyridoxal 5'-phosphate from ribose 5-phosphate (RBP), glyceraldehyde 3-phosphate (G3P) and ammonia. The ammonia is provided by the PdxT subunit. Can also use ribulose 5-phosphate and dihydroxyacetone phosphate as substrates, resulting from enzyme-catalyzed isomerization of RBP and G3P, respectively. This Francisella tularensis subsp. tularensis (strain FSC 198) protein is Pyridoxal 5'-phosphate synthase subunit PdxS.